The following is a 21-amino-acid chain: Cutinase 2 (21 aa).

This sequence belongs to the cutinase family.

It is found in the secreted. It catalyses the reaction cutin + H2O = cutin monomers.. Its activity is regulated as follows. Inhibited by diisopropyl fluorophosphate (DFP). Its function is as follows. Catalyzes the hydrolysis of complex carboxylic polyesters found in the cell wall of plants. Degrades cutin, a macromolecule that forms the structure of the plant cuticle. Allows pathogenic fungi to penetrate through the cuticular barrier into the host plant during the initial stage of fungal infection. In Colletotrichum gloeosporioides (Anthracnose fungus), this protein is Cutinase 2.